We begin with the raw amino-acid sequence, 114 residues long: Large ribosomal subunit protein bL20c (114 aa).

The protein belongs to the bacterial ribosomal protein bL20 family.

Its subcellular location is the plastid. Functionally, binds directly to 23S ribosomal RNA and is necessary for the in vitro assembly process of the 50S ribosomal subunit. It is not involved in the protein synthesizing functions of that subunit. This is Large ribosomal subunit protein bL20c from Prototheca wickerhamii.